We begin with the raw amino-acid sequence, 198 residues long: Shikimate kinase (198 aa).

26–31 (GSGKSQ) lines the ATP pocket. Ser-30 is a Mg(2+) binding site. Positions 48, 72, and 94 each coordinate substrate. An ATP-binding site is contributed by Arg-132. Arg-151 contributes to the substrate binding site. Residue Gln-167 participates in ATP binding.

The protein belongs to the shikimate kinase family. Monomer. It depends on Mg(2+) as a cofactor.

Its subcellular location is the cytoplasm. It carries out the reaction shikimate + ATP = 3-phosphoshikimate + ADP + H(+). Its pathway is metabolic intermediate biosynthesis; chorismate biosynthesis; chorismate from D-erythrose 4-phosphate and phosphoenolpyruvate: step 5/7. In terms of biological role, catalyzes the specific phosphorylation of the 3-hydroxyl group of shikimic acid using ATP as a cosubstrate. The sequence is that of Shikimate kinase from Prochlorococcus marinus (strain NATL2A).